We begin with the raw amino-acid sequence, 257 residues long: Ribonuclease HII (257 aa).

One can recognise an RNase H type-2 domain in the interval 72–257; sequence TYIAGIDEVG…FAPIKDMIQK (186 aa). Aspartate 78, glutamate 79, and aspartate 170 together coordinate a divalent metal cation.

It belongs to the RNase HII family. Mn(2+) is required as a cofactor. The cofactor is Mg(2+).

The protein resides in the cytoplasm. The enzyme catalyses Endonucleolytic cleavage to 5'-phosphomonoester.. Its function is as follows. Endonuclease that specifically degrades the RNA of RNA-DNA hybrids. The chain is Ribonuclease HII from Bacillus thuringiensis (strain Al Hakam).